The following is a 157-amino-acid chain: Protein Smg homolog (157 aa).

The protein belongs to the Smg family.

The chain is Protein Smg homolog from Aliivibrio fischeri (strain ATCC 700601 / ES114) (Vibrio fischeri).